The chain runs to 201 residues: Recombination protein RecR (201 aa).

The segment at 60 to 75 (CSCCGNVDTIDPCTVC) adopts a C4-type zinc-finger fold. Residues 83-178 (AVIIVVEDVA…RITRLAHGVP (96 aa)) form the Toprim domain.

Belongs to the RecR family.

In terms of biological role, may play a role in DNA repair. It seems to be involved in an RecBC-independent recombinational process of DNA repair. It may act with RecF and RecO. This Sinorhizobium medicae (strain WSM419) (Ensifer medicae) protein is Recombination protein RecR.